The chain runs to 427 residues: Carboxyl-terminal-processing protease (427 aa).

Residues 1–31 (MGKRTRRFWALAFSLLMGALIYLGNTPSALA) form the signal peptide. Residues 104-186 (NLQVTTTGEL…TKVSLEILSA (83 aa)) enclose the PDZ domain. Catalysis depends on charge relay system residues Ser-313, Asp-324, and Lys-338.

The protein belongs to the peptidase S41A family.

The protein resides in the cellular thylakoid lumen. The catalysed reaction is The enzyme shows specific recognition of a C-terminal tripeptide, Xaa-Yaa-Zaa, in which Xaa is preferably Ala or Leu, Yaa is preferably Ala or Tyr, and Zaa is preferably Ala, but then cleaves at a variable distance from the C-terminus. A typical cleavage is -Ala-Ala-|-Arg-Ala-Ala-Lys-Glu-Asn-Tyr-Ala-Leu-Ala-Ala.. Its function is as follows. Cleavage of the 16 C-terminal residues from the D1 precursor of photosystem II (PSII). This proteolytic processing is necessary to allow the light-driven assembly of the oxygen-evolving cluster (a tetranuclear manganese), which is responsible for photosynthetic water oxidation. This chain is Carboxyl-terminal-processing protease (ctpA), found in Synechocystis sp. (strain ATCC 27184 / PCC 6803 / Kazusa).